Consider the following 215-residue polypeptide: LexA repressor (215 aa).

The H-T-H motif DNA-binding region spans 29–49 (VREICSAVGFKSTSTVHSYLQ). Active-site for autocatalytic cleavage activity residues include serine 138 and lysine 175.

The protein belongs to the peptidase S24 family. In terms of assembly, homodimer.

The catalysed reaction is Hydrolysis of Ala-|-Gly bond in repressor LexA.. Represses a number of genes involved in the response to DNA damage (SOS response), including recA and lexA. In the presence of single-stranded DNA, RecA interacts with LexA causing an autocatalytic cleavage which disrupts the DNA-binding part of LexA, leading to derepression of the SOS regulon and eventually DNA repair. The protein is LexA repressor of Ruminiclostridium cellulolyticum (strain ATCC 35319 / DSM 5812 / JCM 6584 / H10) (Clostridium cellulolyticum).